A 572-amino-acid chain; its full sequence is Nuclear hormone receptor family member nhr-25 (572 aa).

Residues 15 to 90 (GEMCPVCGDR…MGMKMEAVRA (76 aa)) constitute a DNA-binding region (nuclear receptor). 2 NR C4-type zinc fingers span residues 18–38 (CPVC…CESC) and 54–78 (CSAE…FQKC). One can recognise an NR LBD domain in the interval 307-567 (PTEKTVDHFY…PTPQATYTAV (261 aa)).

The protein belongs to the nuclear hormone receptor family. Interacts with lin-39. Interacts with nob-1. As to expression, expressed in the epidermis, the developing somatic gonad, and a subset of other epithelial cells.

The protein localises to the nucleus. In terms of biological role, orphan nuclear receptor and probable transcription activator, required during development. Plays a role in male tail tip morphogenesis regulating the expression of the transcription factor dmd-3 in a negative feedback loop. Regulates vulval precursor cell (VPC) differentiation, in concert with homeobox protein lin-39. Involved in promoting embryogenesis, in concert with homeobox protein nob-1. May play a role in modulation of lifespan and immunity. The polypeptide is Nuclear hormone receptor family member nhr-25 (Caenorhabditis elegans).